The sequence spans 587 residues: Adenine deaminase (587 aa).

It belongs to the metallo-dependent hydrolases superfamily. Adenine deaminase family. Mn(2+) is required as a cofactor.

The enzyme catalyses adenine + H2O + H(+) = hypoxanthine + NH4(+). The sequence is that of Adenine deaminase from Shewanella halifaxensis (strain HAW-EB4).